We begin with the raw amino-acid sequence, 102 residues long: Protein Tat (102 aa).

Residues 1-10 (MEPVDPRLEP) are compositionally biased toward basic and acidic residues. The segment at 1-20 (MEPVDPRLEPWNHPGSQPKT) is disordered. The interaction with human CREBBP stretch occupies residues 1 to 24 (MEPVDPRLEPWNHPGSQPKTACNK). The transactivation stretch occupies residues 1–48 (MEPVDPRLEPWNHPGSQPKTACNKCYCKKCCYHCMCCFTKKGLGISYG). Zn(2+) is bound by residues cysteine 22, cysteine 25, and cysteine 27. The tract at residues 22–37 (CNKCYCKKCCYHCMCC) is cysteine-rich. Lysine 28 carries the N6-acetyllysine; by host PCAF modification. Cysteine 30, histidine 33, cysteine 34, and cysteine 37 together coordinate Zn(2+). Residues 38–48 (FTKKGLGISYG) form a core region. Residues 47 to 102 (YGRKKRSQRRRPPKSSKDHQDPIPEQPLSRQQPGDQTGQKKQKKALEGKTEADPCD) form a disordered region. A compositionally biased stretch (basic residues) spans 48–60 (GRKKRSQRRRPPK). The Nuclear localization signal, RNA-binding (TAR), and protein transduction motif lies at 49–57 (RKKRSQRRR). Residues 49 to 87 (RKKRSQRRRPPKSSKDHQDPIPEQPLSRQQPGDQTGQKK) are interaction with the host capping enzyme RNGTT. Residues lysine 50 and lysine 51 each carry the N6-acetyllysine; by host EP300 and GCN5L2 modification. The residue at position 52 (arginine 52) is an Asymmetric dimethylarginine; by host PRMT6. Positions 74-85 (LSRQQPGDQTGQ) are enriched in polar residues. The segment covering 90–102 (KALEGKTEADPCD) has biased composition (basic and acidic residues).

This sequence belongs to the lentiviruses Tat family. As to quaternary structure, interacts with host CCNT1. Associates with the P-TEFb complex composed at least of Tat, P-TEFb (CDK9 and CCNT1), TAR RNA, RNA Pol II. Recruits the HATs CREBBP, TAF1/TFIID, EP300, PCAF and GCN5L2. Interacts with host KAT5/Tip60; this interaction targets the latter to degradation. Interacts with the host deacetylase SIRT1. Interacts with host capping enzyme RNGTT; this interaction stimulates RNGTT. Binds to host KDR, and to the host integrins ITGAV/ITGB3 and ITGA5/ITGB1. Interacts with host KPNB1/importin beta-1 without previous binding to KPNA1/importin alpha-1. Interacts with EIF2AK2. Interacts with host nucleosome assembly protein NAP1L1; this interaction may be required for the transport of Tat within the nucleus, since the two proteins interact at the nuclear rim. Interacts with host C1QBP/SF2P32; this interaction involves lysine-acetylated Tat. Interacts with the host chemokine receptors CCR2, CCR3 and CXCR4. Interacts with host DPP4/CD26; this interaction may trigger an anti-proliferative effect. Interacts with host LDLR. Interacts with the host extracellular matrix metalloproteinase MMP1. Interacts with host PRMT6; this interaction mediates Tat's methylation. Interacts with, and is ubiquitinated by MDM2/Hdm2. Interacts with host PSMC3 and HTATIP2. Interacts with STAB1; this interaction may overcome SATB1-mediated repression of IL2 and IL2RA (interleukin) in T cells by binding to the same domain than HDAC1. Interacts (when acetylated) with human CDK13, thereby increasing HIV-1 mRNA splicing and promoting the production of the doubly spliced HIV-1 protein Nef. Interacts with host TBP; this interaction modulates the activity of transcriptional pre-initiation complex. Interacts with host RELA. Interacts with host PLSCR1; this interaction negatively regulates Tat transactivation activity by altering its subcellular distribution. In terms of processing, asymmetrical arginine methylation by host PRMT6 seems to diminish the transactivation capacity of Tat and affects the interaction with host CCNT1. Acetylation by EP300, CREBBP, GCN5L2/GCN5 and PCAF regulates the transactivation activity of Tat. EP300-mediated acetylation of Lys-50 promotes dissociation of Tat from the TAR RNA through the competitive binding to PCAF's bromodomain. In addition, the non-acetylated Tat's N-terminus can also interact with PCAF. PCAF-mediated acetylation of Lys-28 enhances Tat's binding to CCNT1. Lys-50 is deacetylated by SIRT1. Post-translationally, polyubiquitination by host MDM2 does not target Tat to degradation, but activates its transactivation function and fosters interaction with CCNT1 and TAR RNA. In terms of processing, phosphorylated by EIF2AK2 on serine and threonine residues adjacent to the basic region important for TAR RNA binding and function. Phosphorylation of Tat by EIF2AK2 is dependent on the prior activation of EIF2AK2 by dsRNA.

Its subcellular location is the host nucleus. The protein resides in the host nucleolus. It localises to the host cytoplasm. It is found in the secreted. Functionally, transcriptional activator that increases RNA Pol II processivity, thereby increasing the level of full-length viral transcripts. Recognizes a hairpin structure at the 5'-LTR of the nascent viral mRNAs referred to as the transactivation responsive RNA element (TAR) and recruits the cyclin T1-CDK9 complex (P-TEFb complex) that will in turn hyperphosphorylate the RNA polymerase II to allow efficient elongation. The CDK9 component of P-TEFb and other Tat-activated kinases hyperphosphorylate the C-terminus of RNA Pol II that becomes stabilized and much more processive. Other factors such as HTATSF1/Tat-SF1, SUPT5H/SPT5, and HTATIP2 are also important for Tat's function. Besides its effect on RNA Pol II processivity, Tat induces chromatin remodeling of proviral genes by recruiting the histone acetyltransferases (HATs) CREBBP, EP300 and PCAF to the chromatin. This also contributes to the increase in proviral transcription rate, especially when the provirus integrates in transcriptionally silent region of the host genome. To ensure maximal activation of the LTR, Tat mediates nuclear translocation of NF-kappa-B by interacting with host RELA. Through its interaction with host TBP, Tat may also modulate transcription initiation. Tat can reactivate a latently infected cell by penetrating in it and transactivating its LTR promoter. In the cytoplasm, Tat is thought to act as a translational activator of HIV-1 mRNAs. In terms of biological role, extracellular circulating Tat can be endocytosed by surrounding uninfected cells via the binding to several surface receptors such as CD26, CXCR4, heparan sulfate proteoglycans (HSPG) or LDLR. Neurons are rarely infected, but they internalize Tat via their LDLR. Through its interaction with nuclear HATs, Tat is potentially able to control the acetylation-dependent cellular gene expression. Modulates the expression of many cellular genes involved in cell survival, proliferation or in coding for cytokines or cytokine receptors. Tat plays a role in T-cell and neurons apoptosis. Tat induced neurotoxicity and apoptosis probably contribute to neuroAIDS. Circulating Tat also acts as a chemokine-like and/or growth factor-like molecule that binds to specific receptors on the surface of the cells, affecting many cellular pathways. In the vascular system, Tat binds to ITGAV/ITGB3 and ITGA5/ITGB1 integrins dimers at the surface of endothelial cells and competes with bFGF for heparin-binding sites, leading to an excess of soluble bFGF. The protein is Protein Tat of Human immunodeficiency virus type 1 group N (isolate YBF106) (HIV-1).